The following is an 812-amino-acid chain: Plasminogen (812 aa).

Residues 1-19 (MDHKEIILLFLLFLKPGQG) form the signal peptide. The region spanning 20 to 98 (DSLDGYVSTQ…RDVILFEKRV (79 aa)) is the PAN domain. Intrachain disulfides connect C49–C73, C53–C61, C103–C181, C124–C164, C152–C176, C185–C262, C188–C316, C206–C245, C234–C257, C275–C352, C296–C335, C324–C347, C376–C454, C397–C437, C425–C449, C481–C560, C502–C543, C531–C555, C568–C687, C578–C586, and C609–C625. Kringle domains lie at 102–181 (ECKT…IPEC), 184–262 (ECMY…IPRC), 274–352 (QCLK…IPSC), 375–454 (ECYQ…LKRC), and 480–560 (DCMY…IPLC). Residues 582–810 (VVGGCVANPH…YVNWIEREMR (229 aa)) enclose the Peptidase S1 domain. The residue at position 598 (S598) is a Phosphoserine. Residues H624 and D667 each act as charge relay system in the active site. S690 carries the post-translational modification Phosphoserine. 3 disulfide bridges follow: C701/C768, C731/C747, and C758/C786. The active-site Charge relay system is S762.

Belongs to the peptidase S1 family. Plasminogen subfamily. As to quaternary structure, interacts (both mature PLG and the angiostatin peptide) with AMOT and CSPG4. Interacts (via the Kringle domains) with HRG; the interaction tethers PLG to the cell surface and enhances its activation. Interacts (via Kringle 4 domain) with ADA; the interaction stimulates PLG activation when in complex with DPP4. Angiostatin: Interacts with ATP5F1A; the interaction inhibits most of the angiogenic effects of angiostatin. In the presence of the inhibitor, the activation involves only cleavage after Arg-581, yielding two chains held together by two disulfide bonds. In the absence of the inhibitor, the activation involves additionally the removal of the activation peptide.

The protein localises to the secreted. It catalyses the reaction Preferential cleavage: Lys-|-Xaa &gt; Arg-|-Xaa, higher selectivity than trypsin. Converts fibrin into soluble products.. With respect to regulation, converted into plasmin by plasminogen activators, both plasminogen and its activator being bound to fibrin. Cannot be activated with streptokinase. In terms of biological role, plasmin dissolves the fibrin of blood clots and acts as a proteolytic factor in a variety of other processes including embryonic development, tissue remodeling, tumor invasion, and inflammation. In ovulation, weakens the walls of the Graafian follicle. It activates the urokinase-type plasminogen activator, collagenases and several complement zymogens, such as C1, C4 and C5. Cleavage of fibronectin and laminin leads to cell detachment and apoptosis. Also cleaves fibrin, thrombospondin and von Willebrand factor. Its role in tissue remodeling and tumor invasion may be modulated by CSPG4. Binds to cells. Its function is as follows. Angiostatin is an angiogenesis inhibitor that blocks neovascularization and growth of experimental primary and metastatic tumors in vivo. This is Plasminogen (Plg) from Rattus norvegicus (Rat).